Reading from the N-terminus, the 359-residue chain is Type II restriction enzyme HgiDI (359 aa).

It catalyses the reaction Endonucleolytic cleavage of DNA to give specific double-stranded fragments with terminal 5'-phosphates.. In terms of biological role, a P subtype restriction enzyme that recognizes the double-stranded sequence 5'-GRCGYC-3' and cleaves after R-2. This Herpetosiphon aurantiacus (Herpetosiphon giganteus) protein is Type II restriction enzyme HgiDI.